The primary structure comprises 560 residues: Protein GAT2 (560 aa).

3 disordered regions span residues 274 to 297 (RQQE…FSNK), 345 to 383 (FLST…ISSS), and 412 to 461 (LNTK…SDEK). The span at 347–361 (STSSSSPSPTAGSAP) shows a compositional bias: low complexity. Residues 369-378 (RQDDPNDKKM) show a composition bias toward basic and acidic residues. The segment covering 414–425 (TKKKNNRGRPRA) has biased composition (basic residues). Positions 428–456 (RQPTLTTSSHFINNSNPGAAAVSTTTPAA) are enriched in polar residues. A GATA-type zinc finger spans residues 472-497 (CFHCGETETPEWRKGPYGTRTLCNAC).

In Saccharomyces cerevisiae (strain ATCC 204508 / S288c) (Baker's yeast), this protein is Protein GAT2 (GAT2).